The sequence spans 204 residues: MELRLWFLFGLTVTSAAGPVPRPQPGDAGRSGVPRAPSATKETMAMVATRGPSPRSSGQEQEPGPFGELAAKGGPVRYRARRCTCFTYKDKECVYYCHLDIIWINTPERTVPYGLSNHRGSVRGRRSAGPSPQSSQPSRGTLRCACAESQDRACVYFCTRTLAARGASRTPETPDKEAGKPAGRATGGLHPRRLKSRTDKARRL.

An N-terminal signal peptide occupies residues 1 to 17 (MELRLWFLFGLTVTSAA). Residues 18–71 (GPVPRPQPGDAGRSGVPRAPSATKETMAMVATRGPSPRSSGQEQEPGPFGELAA) are disordered. The propeptide occupies 18–80 (GPVPRPQPGD…AKGGPVRYRA (63 aa)). 2 disulfide bridges follow: cysteine 83–cysteine 97 and cysteine 85–cysteine 93. Residues 104-204 (INTPERTVPY…KSRTDKARRL (101 aa)) constitute a propeptide that is removed on maturation. Positions 115–140 (LSNHRGSVRGRRSAGPSPQSSQPSRG) are disordered. Residues 127 to 140 (SAGPSPQSSQPSRG) show a composition bias toward low complexity. The segment at 144-158 (CACAESQDRACVYFC) is endothelin-like. A disordered region spans residues 166–204 (GASRTPETPDKEAGKPAGRATGGLHPRRLKSRTDKARRL).

The protein belongs to the endothelin/sarafotoxin family.

The protein resides in the secreted. Its function is as follows. Endothelins are endothelium-derived vasoconstrictor peptides. The chain is Endothelin-3 (EDN3) from Sus scrofa (Pig).